The primary structure comprises 489 residues: Cytochrome P450 2C70 (489 aa).

The first 27 residues, 1-27, serve as a signal peptide directing secretion; sequence MALFIFLGIWLSCFLFLFLWNQHRGRG. Position 434 (C434) interacts with heme.

It belongs to the cytochrome P450 family. Heme is required as a cofactor. Expressed in liver.

It localises to the endoplasmic reticulum membrane. Its subcellular location is the microsome membrane. It carries out the reaction chenodeoxycholate + reduced [NADPH--hemoprotein reductase] + O2 = alpha-muricholate + oxidized [NADPH--hemoprotein reductase] + H2O + H(+). The enzyme catalyses ursodeoxycholate + reduced [NADPH--hemoprotein reductase] + O2 = beta-muricholate + oxidized [NADPH--hemoprotein reductase] + H2O + H(+). In terms of biological role, a cytochrome P450 monooxygenase involved in muricholic acid (MCA) synthesis. Hydroxylates at the 6-beta position two major bile acids, chenodeoxycholic acid (CDCA) and ursodeoxycholic acid (UDCA) to form alpha-MCA and beta-MCA, respectively. May regulate NR1H4/farnesoid X receptor signaling, as taurine-conjugated MCAs are antagonists of NR1H4. Mechanistically, uses molecular oxygen inserting one oxygen atom into a substrate, and reducing the second into a water molecule, with two electrons provided by NADPH via cytochrome P450 reductase (CPR; NADPH-ferrihemoprotein reductase). The sequence is that of Cytochrome P450 2C70 from Mus musculus (Mouse).